The sequence spans 1121 residues: Cilia- and flagella-associated protein 70 (1121 aa).

Basic and acidic residues predominate over residues Asn-410–Pro-428. A disordered region spans residues Asn-410–Gly-457. 3 TPR repeats span residues Ser-635–Asn-668, Leu-669–His-702, and His-704–Asn-736. Disordered regions lie at residues Lys-778–Ile-802 and Gln-836–Ser-858. TPR repeat units follow at residues Cys-929–Asn-962, Pro-963–Ala-996, His-1000–Cys-1033, Thr-1035–Asn-1066, and Glu-1068–Asp-1100.

The protein belongs to the CFAP70 family. In terms of tissue distribution, expressed in testis.

The protein localises to the cell projection. The protein resides in the cilium. It localises to the flagellum. Its subcellular location is the cytoplasm. It is found in the cytoskeleton. The protein localises to the flagellum basal body. The protein resides in the cilium axoneme. Functionally, axoneme-binding protein that plays a role in the regulation of ciliary motility and cilium length. This Homo sapiens (Human) protein is Cilia- and flagella-associated protein 70.